Consider the following 938-residue polypeptide: Protein SEY1 (938 aa).

The tract at residues 1–159 is disordered; that stretch reads MTSQSHGAPP…QKSAKSTPGS (159 aa). Residues 1–839 lie on the Cytoplasmic side of the membrane; sequence MTSQSHGAPP…KRSTIQSTTQ (839 aa). Residues 33-45 show a composition bias toward low complexity; it reads SVSSSHSSHSPVT. A compositionally biased stretch (pro residues) spans 74–94; sequence IAAPEPIAAPEPIPAPEPIAA. Basic and acidic residues predominate over residues 100–118; the sequence is LKSEHKPVEREHKPVERKP. Residues 146-158 show a composition bias toward polar residues; the sequence is VPTSQKSAKSTPG. Residues 192–423 enclose the GB1/RHD3-type G domain; it reads GLDYHVVAVF…DPNYVFKPVY (232 aa). 202-209 serves as a coordination point for GTP; the sequence is GSQSTGKS. A coiled-coil region spans residues 603 to 630; that stretch reads SYDDTLAALEQELDTLRDHKSKVEIDRL. Residues 840-860 traverse the membrane as a helical segment; the sequence is IPLYMYGLLLLLGWNEIMAVL. At 861-863 the chain is on the lumenal side; sequence RSP. Residues 864–884 form a helical membrane-spanning segment; it reads VYFMFLLVAAGAAYVIHTLHL. Over 885-938 the chain is Cytoplasmic; the sequence is WGPLTHMTNTMIAEATDMAKAKLKQVLNEAPTGETREREAPVGSSRDDVELKDL. The segment at 911 to 938 is disordered; the sequence is LNEAPTGETREREAPVGSSRDDVELKDL. Residues 918 to 938 show a composition bias toward basic and acidic residues; sequence ETREREAPVGSSRDDVELKDL.

This sequence belongs to the TRAFAC class dynamin-like GTPase superfamily. GB1/RHD3 GTPase family. RHD3 subfamily.

The protein localises to the endoplasmic reticulum membrane. Functionally, cooperates with the reticulon proteins and tubule-shaping DP1 family proteins to generate and maintain the structure of the tubular endoplasmic reticulum network. Has GTPase activity, which is required for its function in ER organization. In Yarrowia lipolytica (strain CLIB 122 / E 150) (Yeast), this protein is Protein SEY1.